Reading from the N-terminus, the 179-residue chain is Inosine/xanthosine triphosphatase (179 aa).

8–13 (TTNPAK) provides a ligand contact to substrate. D38 and E68 together coordinate Mg(2+). 68–69 (EA) is a binding site for substrate.

The protein belongs to the YjjX NTPase family. Homodimer. Mg(2+) serves as cofactor. Mn(2+) is required as a cofactor.

It carries out the reaction XTP + H2O = XDP + phosphate + H(+). It catalyses the reaction ITP + H2O = IDP + phosphate + H(+). Its function is as follows. Phosphatase that hydrolyzes non-canonical purine nucleotides such as XTP and ITP to their respective diphosphate derivatives. Probably excludes non-canonical purines from DNA/RNA precursor pool, thus preventing their incorporation into DNA/RNA and avoiding chromosomal lesions. The chain is Inosine/xanthosine triphosphatase from Pectobacterium carotovorum subsp. carotovorum (strain PC1).